Consider the following 499-residue polypeptide: Pyruvate kinase (499 aa).

Arg50 contacts substrate. 4 residues coordinate K(+): Asn52, Ser54, Asp84, and Thr85. 52-55 (NFSH) lines the ATP pocket. Arg91 lines the ATP pocket. Mg(2+) is bound at residue Glu241. Substrate is bound by residues Gly264, Asp265, and Thr297. Residue Asp265 coordinates Mg(2+).

The protein belongs to the pyruvate kinase family. As to quaternary structure, homotetramer. Mg(2+) serves as cofactor. It depends on K(+) as a cofactor.

It carries out the reaction pyruvate + ATP = phosphoenolpyruvate + ADP + H(+). It functions in the pathway carbohydrate degradation; glycolysis; pyruvate from D-glyceraldehyde 3-phosphate: step 5/5. Activated by fructose 2,6-bisphosphate, activated by the effector in a non cooperative manner. The chain is Pyruvate kinase (PYK) from Leishmania mexicana.